Reading from the N-terminus, the 390-residue chain is Protein phosphatase methylesterase 1 (390 aa).

Residues 19 to 50 (FGLSSLSEDPDESESNSNYFSPTPQPPNELRT) form a disordered region. An AB hydrolase-1 domain is found at 100 to 332 (PIFICHHGAG…NLIIGQMQGK (233 aa)). Catalysis depends on residues Ser186, Asp213, and His346.

Belongs to the AB hydrolase superfamily.

It catalyses the reaction [phosphatase 2A protein]-C-terminal L-leucine methyl ester + H2O = [phosphatase 2A protein]-C-terminal L-leucine + methanol + H(+). Demethylates proteins that have been reversibly carboxymethylated. Demethylates the phosphatase PP2A catalytic subunit. This chain is Protein phosphatase methylesterase 1 (PPE1), found in Debaryomyces hansenii (strain ATCC 36239 / CBS 767 / BCRC 21394 / JCM 1990 / NBRC 0083 / IGC 2968) (Yeast).